The sequence spans 266 residues: Small ribosomal subunit protein uS2 (266 aa).

Residues 233–266 (AVREEEFASAPDAGKKGRQAQPKKGKRASDAAAE) are disordered. The span at 248-258 (KGRQAQPKKGK) shows a compositional bias: basic residues.

Belongs to the universal ribosomal protein uS2 family.

In Xylella fastidiosa (strain M23), this protein is Small ribosomal subunit protein uS2.